We begin with the raw amino-acid sequence, 746 residues long: Transcription factor pbcR (746 aa).

Positions 1-12 are enriched in polar residues; the sequence is MYPWSSTGTSPF. The disordered stretch occupies residues 1–40; that stretch reads MYPWSSTGTSPFSHPDNEGAESGDMSMGEEQQQPHQRRQK. Residues 47–76 constitute a DNA-binding region (zn(2)-C6 fungal-type); it reads CQSCRASKVRCDQPNPGMPCLRCQKSGKPC. The interval 109 to 131 is disordered; it reads ELQDSAGDGETAHSTALRSPSQL. Residues 120–131 are compositionally biased toward polar residues; it reads AHSTALRSPSQL.

Its subcellular location is the nucleus. Transcription factor; part of the gene cluster that mediates the biosynthesis of the diterpene ent-pimara-8(14),15-diene (PD). Acts as a positive regulator for the cluster gene. Down-regulates the expression of the penicillin gene cluster, two putative polyketide clusters, and one putative nonribosomal peptide cluster. This Emericella nidulans (strain FGSC A4 / ATCC 38163 / CBS 112.46 / NRRL 194 / M139) (Aspergillus nidulans) protein is Transcription factor pbcR.